The primary structure comprises 332 residues: Fructose-1,6-bisphosphatase class 1 (332 aa).

Residues E89, D110, L112, and D113 each coordinate Mg(2+). Substrate is bound by residues 113 to 116, N206, Y239, 257 to 259, and K269; these read DGSS and YLY. E275 provides a ligand contact to Mg(2+).

It belongs to the FBPase class 1 family. Homotetramer. It depends on Mg(2+) as a cofactor.

The protein resides in the cytoplasm. The enzyme catalyses beta-D-fructose 1,6-bisphosphate + H2O = beta-D-fructose 6-phosphate + phosphate. It participates in carbohydrate biosynthesis; gluconeogenesis. The protein is Fructose-1,6-bisphosphatase class 1 of Escherichia coli (strain ATCC 8739 / DSM 1576 / NBRC 3972 / NCIMB 8545 / WDCM 00012 / Crooks).